A 374-amino-acid polypeptide reads, in one-letter code: Chaperone protein DnaJ (374 aa).

In terms of domain architecture, J spans 5–70; the sequence is DFYEILGVGK…QKRDAYDRYG (66 aa). Residues 29–50 form a disordered region; that stretch reads AMKHHPDRNPDSKGAEDKFKEA. A compositionally biased stretch (basic and acidic residues) spans 35–50; it reads DRNPDSKGAEDKFKEA. The segment at 134-212 adopts a CR-type zinc-finger fold; that stretch reads GYDTTIRVPS…CSGAGKIKRN (79 aa). Positions 147, 150, 164, 167, 186, 189, 200, and 203 each coordinate Zn(2+). CXXCXGXG motif repeat units follow at residues 147-154, 164-171, 186-193, and 200-207; these read CETCDGSG, CTTCGGHG, CPKCHGSG, and CGTCSGAG.

This sequence belongs to the DnaJ family. Homodimer. Zn(2+) serves as cofactor.

The protein resides in the cytoplasm. Participates actively in the response to hyperosmotic and heat shock by preventing the aggregation of stress-denatured proteins and by disaggregating proteins, also in an autonomous, DnaK-independent fashion. Unfolded proteins bind initially to DnaJ; upon interaction with the DnaJ-bound protein, DnaK hydrolyzes its bound ATP, resulting in the formation of a stable complex. GrpE releases ADP from DnaK; ATP binding to DnaK triggers the release of the substrate protein, thus completing the reaction cycle. Several rounds of ATP-dependent interactions between DnaJ, DnaK and GrpE are required for fully efficient folding. Also involved, together with DnaK and GrpE, in the DNA replication of plasmids through activation of initiation proteins. This Janthinobacterium sp. (strain Marseille) (Minibacterium massiliensis) protein is Chaperone protein DnaJ.